Here is a 148-residue protein sequence, read N- to C-terminus: MELILLEKVANLGNLGDKVKVKAGYGRNFLLPFGKATVANAANLAAFEERRAELEKAAADKKSSAESRAAQLAELEVTITATAGDEGKLFGSIGTHDIADALTASGVEVAKAEVRLPNGTIRQVGEYDVAVHLHSDVEATVRVVVVAA.

The protein belongs to the bacterial ribosomal protein bL9 family.

Binds to the 23S rRNA. The chain is Large ribosomal subunit protein bL9 from Pseudomonas putida (strain GB-1).